The following is a 215-amino-acid chain: Beta-crystallin A3 (215 aa).

The segment at 1–30 (MGEAAVPPELDTFPAAKMAQTNPLPVPMGP) is N-terminal arm. Beta/gamma crystallin 'Greek key' domains follow at residues 31-70 (WKIT…KVEC) and 71-117 (GAWV…RPVC). The tract at residues 118–123 (SANHKE) is connecting peptide. Beta/gamma crystallin 'Greek key' domains lie at 124–165 (SKIT…KIPC) and 166–214 (GAWV…RRIQ).

Belongs to the beta/gamma-crystallin family. In terms of assembly, homo/heterodimer, or complexes of higher-order. The structure of beta-crystallin oligomers seems to be stabilized through interactions between the N-terminal arms.

Crystallins are the dominant structural components of the vertebrate eye lens. This chain is Beta-crystallin A3 (CRYBA1), found in Gallus gallus (Chicken).